The chain runs to 23 residues: NLVQFELLIMKVAKRSGLLSYSA.

Requires Ca(2+) as cofactor. Post-translationally, contains 7 disulfide bonds. In terms of tissue distribution, expressed by the venom gland.

The protein localises to the secreted. The enzyme catalyses a 1,2-diacyl-sn-glycero-3-phosphocholine + H2O = a 1-acyl-sn-glycero-3-phosphocholine + a fatty acid + H(+). In terms of biological role, snake venom phospholipase A2 (PLA2) that significantly inhibits ADP-induced platelet aggregation in platelet-rich plasma of human, rabbit and guinea pig. PLA2 catalyzes the calcium-dependent hydrolysis of the 2-acyl groups in 3-sn-phosphoglycerides. In Crotalus viridis viridis (Prairie rattlesnake), this protein is Acidic phospholipase A2 Cvv-E6c.